A 908-amino-acid polypeptide reads, in one-letter code: Translation initiation factor IF-2 (908 aa).

2 disordered regions span residues 52–229 (QSHG…AEEA) and 241–316 (AGQY…SAQH). The segment covering 65 to 84 (KSKTTSTARVTGSSGKSKSV) has biased composition (polar residues). Basic and acidic residues-rich tracts occupy residues 94 to 108 (FEKP…ELAA), 120 to 138 (AAKD…EERQ), 176 to 185 (IEVKPKEQPK), 193 to 229 (PKVE…AEEA), 270 to 280 (SFEKERREIKR), and 294 to 303 (KNQDEREIKN). The tr-type G domain maps to 409–578 (TRPPVVTIMG…SLQAELMELE (170 aa)). Positions 418 to 425 (GHVDHGKT) are G1. 418-425 (GHVDHGKT) is a GTP binding site. Residues 443–447 (GITQH) are G2. Positions 464–467 (DTPG) are G3. Residues 464-468 (DTPGH) and 518-521 (NKMD) contribute to the GTP site. The interval 518-521 (NKMD) is G4. The G5 stretch occupies residues 554-556 (SAK).

It belongs to the TRAFAC class translation factor GTPase superfamily. Classic translation factor GTPase family. IF-2 subfamily.

The protein resides in the cytoplasm. One of the essential components for the initiation of protein synthesis. Protects formylmethionyl-tRNA from spontaneous hydrolysis and promotes its binding to the 30S ribosomal subunits. Also involved in the hydrolysis of GTP during the formation of the 70S ribosomal complex. The chain is Translation initiation factor IF-2 from Psychrobacter arcticus (strain DSM 17307 / VKM B-2377 / 273-4).